We begin with the raw amino-acid sequence, 724 residues long: MADQQKAGGCPVMHGAMTQVGESNLDMWPNALNLDILHQHDRKPDPMGEGFNYREEVKKLDLDAVKQDLHQLMTDSQAWWPADWGHYGGLMIRMAWHAAGTYRVADGRGGGGTGNQRFAPINSWPDNVNLDKARRLLWPIKKKYGNRLSWADLIILAGNVAYESMGLKTFGFSLGREDIWHPEKDIYWGSEKEWLAPSDSEDSRYGEDRASLENPLAAVMMGLIYVNPEGVDGNPDPLRTAEDVRITFERMAMNDEETVALTAGGHTVGKCHGNGDVENLGPDPESADVEEQGLGWNNKVTRGVGRDTVSSGIEGAWTTYPTRWDNGYFHLLLNYEWELTKSPAGAWQWEPVDIKEEDKPVDVEDPSIRLNPIMTDADMAMKMDPAYRKISERFYNDPAYFDEVFARAWFKLTHRDLGPRTRYIGPEAPQEDLIWQDPVPAGRTDYDVEALKAKIADSGLSIGEMVSTAWDSARTFRGSDNRGGANGARIRLAPQKDWEGNEPERLSKVLGVLEGIAADAGASLADTIVLAGNVGIEQAARAAGHDITVPFAPGRGDASQEMTDVDSFQYLEPLADGYRNWVKKEYAVQPEEMMLDRTQLMGLTAPEMTVLVGGMRVLGTNHGGTKHGVLTDREGQLTNDFFVNLTDMAYTWKPVGSNRYEIRQRSSDAVKWTATRVDLVFGSNSILRSYAEVYAQDDNREKFVHDFVAAWTKVMNADRFDLVA.

A cross-link (tryptophyl-tyrosyl-methioninium (Trp-Tyr) (with M-251)) is located at residues 96-225 (WHAAGTYRVA…LAAVMMGLIY (130 aa)). His97 serves as the catalytic Proton acceptor. The segment at residues 225–251 (YVNPEGVDGNPDPLRTAEDVRITFERM) is a cross-link (tryptophyl-tyrosyl-methioninium (Tyr-Met) (with W-96)). His266 is a binding site for heme b.

Belongs to the peroxidase family. Peroxidase/catalase subfamily. In terms of assembly, homodimer or homotetramer. The cofactor is heme b. In terms of processing, formation of the three residue Trp-Tyr-Met cross-link is important for the catalase, but not the peroxidase activity of the enzyme.

It catalyses the reaction H2O2 + AH2 = A + 2 H2O. It carries out the reaction 2 H2O2 = O2 + 2 H2O. Its function is as follows. Bifunctional enzyme with both catalase and broad-spectrum peroxidase activity. In Halorhodospira halophila (strain DSM 244 / SL1) (Ectothiorhodospira halophila (strain DSM 244 / SL1)), this protein is Catalase-peroxidase.